The sequence spans 194 residues: MTPGAIAILSLSMSTDAFAAAVSRGASHRPGVVSAVKAGFVFGVIEAITPLIGWSLGLVAADLVKEVDHWIAFGLLTIVGGKMIWEATRSQDHHEEGAAPKRSNRWALIATAVGTSIDAAAVGVGLAFIGANIWVIAASIGFTTFVCTTVGMLIGKTVGQRFGKMAELIGGLALVGLGAMILIQHTGVLKTQLG.

6 helical membrane-spanning segments follow: residues 2 to 22 (TPGA…AAAV), 40 to 60 (FVFG…GLVA), 67 to 87 (VDHW…IWEA), 107 to 129 (ALIA…LAFI), 133 to 155 (IWVI…MLIG), and 168 to 188 (LIGG…HTGV).

The protein belongs to the MntP (TC 9.B.29) family.

Its subcellular location is the cell inner membrane. Probably functions as a manganese efflux pump. This chain is Putative manganese efflux pump MntP, found in Rhodopseudomonas palustris (strain BisA53).